We begin with the raw amino-acid sequence, 58 residues long: Lantibiotic macedovicin (58 aa).

Positions M1–G25 are excised as a propeptide. 2 positions are modified to 2,3-didehydrobutyrine: T33 and T35. 2 consecutive cross-links (beta-methyllanthionine (Thr-Cys)) follow at residues T33–C38 and T35–C57. C46 and C54 are joined by a disulfide.

In terms of processing, maturation of macedovicin involves the enzymatic dehydration of Thr-33 and Thr-35 into dehydrobutyrine residues, that can form a beta-methyllanthionine bond with Cys-38 and Cys-57, respectively. This is followed by membrane translocation and cleavage of the modified precursor.

The protein localises to the secreted. Its function is as follows. Lanthionine-containing peptide antibiotic (lantibiotic) active on Gram-positive bacteria. Macedovicin inhibits a broad spectrum of lactic acid bacteria, several food spoilage species (e.g. Clostridium spp.) and oral streptococci. The bactericidal activity of lantibiotics is based on depolarization of energized bacterial cytoplasmic membranes, initiated by the formation of aqueous transmembrane pores. The protein is Lantibiotic macedovicin of Streptococcus macedonicus (strain ACA-DC 198).